Reading from the N-terminus, the 440-residue chain is MKVLFTTFAAKSHMHAQVPLAWALQTAGHEVRIASQPDLAEDITRTGLTAVCVGEPLLLEEQMQRVNEGLGDDAEIMESQAEAGMDMTETRPEMLTWDHVLGVFTSMTAMAFQNSCPERMIDDVVAFAREWQPDLIVWDTLSFAGPVAAQVTGAAHARLLFGLDLLGRMRETFLDLQEERLPEQRDDPLREWLTWTLGRYGAEFEEEVAVGQWTVDPVPPSMRFPVKQPFVPLRYIPYNGQAVIPDWLHEPPKKRRVCLTLGVAHREVLDGDRASIGELVEALAELDVEVVATLNEKQLAGMELPDNVRAVDFVPLNALLPTCSAVIHHGGSGTFQTALAHGVPQLIVPDMVWDTIHKAKQLERFGAGLYLHDVDNYTAQDLRDHLLRLLEEPSFAENCARIRREMVGTPSPNDIVPLLEKLTAEHRRDRGARGTVRGEQ.

The catalysed reaction is dTDP-2-deoxy-beta-L-fucose + aclacinomycin T = aclacinomycin S + dTDP + H(+). Involved in the biosynthesis of the trisaccharide moiety characteristic of the antitumor drug aclacinomycins. In the first reaction, AknK catalyzes the transfer of 2-deoxy-beta-L-fucose from the activated donor dTDP-2-deoxy-beta-L-fucose to the mono-glycosylated aclacinomycin T (rhodosaminyl aklavinone), forming the di-glycosylated aclacinomycin S (L-2-deoxyfucosyl-L-rhodosaminyl aklavinone). It can also catalyze the addition of an alternate dTDP-L-sugar, dTDP-L-daunosamine, to aclacinomycin T and the addition of 2-deoxy-beta-L-fucose to the mono-glycosylated aglycones (monoglycosylated anthracyclines) such as daunomycin (daunorubicin), adriamycin (doxorubicin) and idarubicin. In vitro, AknK also catalyzes the addition of a second L-2-deoxyfucosyl moiety from dTDP-2-deoxy-beta-L-fucose, albeit with reduced activity, to the natural disaccharide chain of aclacinomycin S to produce L-deoxyfucosyl-L-deoxyfucosyl-L-rhodosaminyl aklavinone (2-deoxy-alpha-D-fucosyl-aclacinomycin S), a variant of the natural aclacinomycin A. In Streptomyces galilaeus, this protein is Aclacinomycin-T 2-deoxy-L-fucose transferase.